The primary structure comprises 406 residues: S-adenosylmethionine synthase (406 aa).

Residue H16 participates in ATP binding. D18 serves as a coordination point for Mg(2+). E44 is a binding site for K(+). Positions 57 and 100 each coordinate L-methionine. The flexible loop stretch occupies residues 100–110 (QSVDIAQGVDR). Residues 165–167 (DAK), D241, 247–248 (RK), A264, and K268 each bind ATP. D241 contacts L-methionine. K272 lines the L-methionine pocket.

The protein belongs to the AdoMet synthase family. Homotetramer; dimer of dimers. Mg(2+) is required as a cofactor. The cofactor is K(+).

The protein resides in the cytoplasm. It carries out the reaction L-methionine + ATP + H2O = S-adenosyl-L-methionine + phosphate + diphosphate. The protein operates within amino-acid biosynthesis; S-adenosyl-L-methionine biosynthesis; S-adenosyl-L-methionine from L-methionine: step 1/1. In terms of biological role, catalyzes the formation of S-adenosylmethionine (AdoMet) from methionine and ATP. The overall synthetic reaction is composed of two sequential steps, AdoMet formation and the subsequent tripolyphosphate hydrolysis which occurs prior to release of AdoMet from the enzyme. The protein is S-adenosylmethionine synthase of Chromohalobacter salexigens (strain ATCC BAA-138 / DSM 3043 / CIP 106854 / NCIMB 13768 / 1H11).